Here is a 122-residue protein sequence, read N- to C-terminus: Large ribosomal subunit protein uL14 (122 aa).

The protein belongs to the universal ribosomal protein uL14 family. In terms of assembly, part of the 50S ribosomal subunit. Forms a cluster with proteins L3 and L19. In the 70S ribosome, L14 and L19 interact and together make contacts with the 16S rRNA in bridges B5 and B8.

Its function is as follows. Binds to 23S rRNA. Forms part of two intersubunit bridges in the 70S ribosome. This chain is Large ribosomal subunit protein uL14, found in Orientia tsutsugamushi (strain Boryong) (Rickettsia tsutsugamushi).